Here is a 708-residue protein sequence, read N- to C-terminus: Polyribonucleotide nucleotidyltransferase (708 aa).

2 residues coordinate Mg(2+): aspartate 488 and aspartate 494. A KH domain is found at proline 555–isoleucine 615. In terms of domain architecture, S1 motif spans glycine 625–valine 692.

The protein belongs to the polyribonucleotide nucleotidyltransferase family. It depends on Mg(2+) as a cofactor.

It localises to the cytoplasm. The enzyme catalyses RNA(n+1) + phosphate = RNA(n) + a ribonucleoside 5'-diphosphate. Functionally, involved in mRNA degradation. Catalyzes the phosphorolysis of single-stranded polyribonucleotides processively in the 3'- to 5'-direction. The sequence is that of Polyribonucleotide nucleotidyltransferase from Thermotoga sp. (strain RQ2).